The chain runs to 463 residues: Peptidase inhibitor 16 (463 aa).

An N-terminal signal peptide occupies residues 1 to 27 (MHGSCSFLMLLLPLLLLLVATTGPVGA). An SCP domain is found at 37–165 (VELHNLYRAQ…TNIELLVCNY (129 aa)). The N-linked (GlcNAc...) asparagine glycan is linked to N114. Disordered regions lie at residues 262 to 281 (TQAPTSLATKDPPSMATEAP), 303 to 341 (EPVTFPKSTHVPIPKSADKVTDKTKVPSRSPENSLDPKM), and 383 to 408 (LQATLDHTGHTSSKSLPNFPNTSATA). Residues 318–327 (SADKVTDKTK) show a composition bias toward basic and acidic residues. Positions 386–395 (TLDHTGHTSS) are O-glycosylated at one site. The span at 392–408 (HTSSKSLPNFPNTSATA) shows a compositional bias: polar residues. N-linked (GlcNAc...) asparagine glycans are attached at residues N403 and N409.

It belongs to the CRISP family. Interacts with PSP94/MSMB. In terms of processing, N- and O-glycosylated. O-glycosylated with core 1 or possibly core 8 glycans. Expressed in prostate, testis, ovary and intestine. Concentrates in prostate cancer patient's sera.

It is found in the secreted. In terms of biological role, may inhibit cardiomyocyte growth. This is Peptidase inhibitor 16 (PI16) from Homo sapiens (Human).